Here is a 727-residue protein sequence, read N- to C-terminus: Sodium-dependent neutral amino acid transporter SLC6A17 (727 aa).

Residues 1–68 (MPKNSKVTQR…DRPAWNSKLQ (68 aa)) lie on the Cytoplasmic side of the membrane. Phosphoserine is present on residues serine 13 and serine 20. Residues 69 to 89 (YILAQIGFSVGLGNIWRFPYL) form a helical membrane-spanning segment. Topologically, residues 90–96 (CQKNGGG) are extracellular. Residues 97-116 (AYLVPYLVLLIIIGIPLFFL) form a helical membrane-spanning segment. Over 117 to 140 (ELAVGQRIRRGSIGVWHYVCPRLG) the chain is Cytoplasmic. Residues 141–161 (GIGFSSCIVCLFVGLYYNVII) traverse the membrane as a helical segment. At 162–224 (GWSVFYFFKS…NSISESGGLN (63 aa)) the chain is on the extracellular side. Asparagine 186 carries N-linked (GlcNAc...) asparagine glycosylation. The chain crosses the membrane as a helical span at residues 225-243 (WKMTVCLLVAWSIVGMAVV). Residues 244–251 (KGIQSSGK) lie on the Cytoplasmic side of the membrane. Residues 252–269 (VMYFSSLFPYVVLACFLV) form a helical membrane-spanning segment. The Extracellular portion of the chain corresponds to 270-304 (RGLLLRGAVDGILHMFTPKLDKMLDPQVWREAATQ). A helical membrane pass occupies residues 305-322 (VFFALGLGFGGVIAFSSY). The Cytoplasmic portion of the chain corresponds to 323–333 (NKQDNNCHFDA). The chain crosses the membrane as a helical span at residues 334-355 (ALVSFINFFTSVLATLVVFAVL). Over 356–451 (GFKANIMNEK…FIAFTEAMTH (96 aa)) the chain is Extracellular. Tyrosine 377 is modified (phosphotyrosine). Asparagine 393 is a glycosylation site (N-linked (GlcNAc...) asparagine). Residues 452-471 (FPASPFWSVMFFLMLINLGL) traverse the membrane as a helical segment. Topologically, residues 472-494 (GSMIGTMAGITTPIIDTFKVPKE) are cytoplasmic. The chain crosses the membrane as a helical span at residues 495-513 (MFTVGCCVFAFFVGLLFVQ). The Extracellular segment spans residues 514-528 (RSGNYFVTMFDDYSA). The helical transmembrane segment at 529–549 (TLPLTVIVILENIAVAWIYGT) threads the bilayer. At 550-569 (KKFMQELTEMLGFRPYRFYF) the chain is on the cytoplasmic side. A helical transmembrane segment spans residues 570–591 (YMWKFVSPLCMAVLTTASIIQL). Residues 592 to 618 (GVSPPGYSAWIKEEAAERYLYFPNWAM) lie on the Extracellular side of the membrane. A helical membrane pass occupies residues 619–641 (ALLITLIAVATLPIPVVFILRHF). At 642–727 (HLLSDGSNTL…LLASTPESEL (86 aa)) the chain is on the cytoplasmic side. Serine 665 and serine 701 each carry phosphoserine. Positions 680–727 (VPSEAPSPMPTHRSYLGPGSTSPLESSSHPNGRYGSGYLLASTPESEL) are disordered. Positions 698-709 (GSTSPLESSSHP) are enriched in polar residues.

Belongs to the sodium:neurotransmitter symporter (SNF) (TC 2.A.22) family. Found exclusively in the central nervous system and is more abundant in the cerebellum and the cerebral cortex. Expressed in PC-12 cell line.

It localises to the cytoplasmic vesicle. The protein resides in the secretory vesicle. Its subcellular location is the synaptic vesicle membrane. It is found in the postsynapse. The protein localises to the presynapse. It carries out the reaction L-proline(in) + Na(+)(in) = L-proline(out) + Na(+)(out). The enzyme catalyses L-leucine(in) + Na(+)(in) = L-leucine(out) + Na(+)(out). The catalysed reaction is glycine(in) + Na(+)(in) = glycine(out) + Na(+)(out). It catalyses the reaction L-alanine(in) + Na(+)(in) = L-alanine(out) + Na(+)(out). It carries out the reaction L-glutamine(in) + Na(+)(in) = L-glutamine(out) + Na(+)(out). In terms of biological role, synaptic vesicle transporter with apparent selectivity for neutral amino acids. The transport is sodium-coupled but chloride-independent, likely driven by the proton electrochemical gradient generated by vacuolar H(+)-ATPase in an overall electrogenic mechanism. May contribute to the synaptic uptake of neurotransmitter precursors in a process coupled in part to vesicle exocytosis. This is Sodium-dependent neutral amino acid transporter SLC6A17 from Rattus norvegicus (Rat).